We begin with the raw amino-acid sequence, 329 residues long: NADH-quinone oxidoreductase subunit H (329 aa).

A run of 9 helical transmembrane segments spans residues 9–29, 42–62, 75–95, 117–137, 154–174, 188–208, 238–258, 260–280, and 309–329; these read LIKILILVAVFSALGGFATYI, GPCYVGPFGLLQVAADGIKLF, FIFTLAPIIAMVSAFVSMAPI, IGFLFFLAVGAAGIYAPILAG, IQLLSFEVVSTLTILAPLMVV, GGFLDWLVFKQPLAFVLFLIA, LKWGMFFLAEYAHLFAFSFVI, IVFFGGFNAWGFIPGGLAILI, and WKIMLPLALLNIVLTGIIILI.

This sequence belongs to the complex I subunit 1 family. NDH-1 is composed of 14 different subunits. Subunits NuoA, H, J, K, L, M, N constitute the membrane sector of the complex.

The protein resides in the cell inner membrane. The catalysed reaction is a quinone + NADH + 5 H(+)(in) = a quinol + NAD(+) + 4 H(+)(out). Its function is as follows. NDH-1 shuttles electrons from NADH, via FMN and iron-sulfur (Fe-S) centers, to quinones in the respiratory chain. The immediate electron acceptor for the enzyme in this species is believed to be ubiquinone. Couples the redox reaction to proton translocation (for every two electrons transferred, four hydrogen ions are translocated across the cytoplasmic membrane), and thus conserves the redox energy in a proton gradient. This subunit may bind ubiquinone. This is NADH-quinone oxidoreductase subunit H from Helicobacter pylori (strain G27).